The following is a 255-amino-acid chain: Triosephosphate isomerase (255 aa).

Residue 9-11 (NWK) participates in substrate binding. Histidine 95 (electrophile) is an active-site residue. The active-site Proton acceptor is glutamate 167. Substrate contacts are provided by residues glycine 173, serine 212, and 233 to 234 (GG).

Belongs to the triosephosphate isomerase family. Homodimer.

The protein resides in the cytoplasm. The enzyme catalyses D-glyceraldehyde 3-phosphate = dihydroxyacetone phosphate. It participates in carbohydrate biosynthesis; gluconeogenesis. Its pathway is carbohydrate degradation; glycolysis; D-glyceraldehyde 3-phosphate from glycerone phosphate: step 1/1. In terms of biological role, involved in the gluconeogenesis. Catalyzes stereospecifically the conversion of dihydroxyacetone phosphate (DHAP) to D-glyceraldehyde-3-phosphate (G3P). This is Triosephosphate isomerase from Escherichia fergusonii (strain ATCC 35469 / DSM 13698 / CCUG 18766 / IAM 14443 / JCM 21226 / LMG 7866 / NBRC 102419 / NCTC 12128 / CDC 0568-73).